A 188-amino-acid polypeptide reads, in one-letter code: Elongation factor P (188 aa).

It belongs to the elongation factor P family.

The protein resides in the cytoplasm. The protein operates within protein biosynthesis; polypeptide chain elongation. Functionally, involved in peptide bond synthesis. Stimulates efficient translation and peptide-bond synthesis on native or reconstituted 70S ribosomes in vitro. Probably functions indirectly by altering the affinity of the ribosome for aminoacyl-tRNA, thus increasing their reactivity as acceptors for peptidyl transferase. This is Elongation factor P from Wolbachia pipientis wMel.